A 391-amino-acid polypeptide reads, in one-letter code: Casein kinase II subunit alpha (391 aa).

Residues 36-41 form an interaction with beta subunit region; it reads QDDYQL. The Protein kinase domain maps to 39-324; that stretch reads YQLVRKLGRG…AREAMEHPYF (286 aa). Residues 45–53 and Lys68 each bind ATP; that span reads LGRGKYSEV. Catalysis depends on Asp156, which acts as the Proton acceptor. A phosphothreonine; by CDK1 mark is found at Thr344 and Thr360. Phosphoserine; by CDK1 is present on residues Ser362 and Ser370.

The protein belongs to the protein kinase superfamily. Ser/Thr protein kinase family. CK2 subfamily. As to quaternary structure, heterotetramer composed of two catalytic subunits (alpha chain and/or alpha' chain) and two regulatory subunits (beta chains). The tetramer can exist as a combination of 2 alpha/2 beta, 2 alpha'/2 beta or 1 alpha/1 alpha'/2 beta subunits. Also part of a CK2-SPT16-SSRP1 complex composed of SSRP1, SUPT16H, CSNK2A1, CSNK2A2 and CSNK2B, which forms following UV irradiation. Interacts with RNPS1. Interacts with SNAI1. Interacts with PML. Interacts with CCAR2. Interacts with HIRIP3. Phosphorylated at Thr-344, Thr-360, Ser-362 and Ser-370 by CDK1 in prophase and metaphase and dephosphorylated during anaphase. Phosphorylation does not directly affect casein kinase 2 activity, but may contribute to its regulation by forming binding sites for interacting proteins and/or targeting it to different compartments.

Its subcellular location is the nucleus. It carries out the reaction L-seryl-[protein] + ATP = O-phospho-L-seryl-[protein] + ADP + H(+). It catalyses the reaction L-threonyl-[protein] + ATP = O-phospho-L-threonyl-[protein] + ADP + H(+). Its activity is regulated as follows. Constitutively active protein kinase whose activity is not directly affected by phosphorylation. Seems to be regulated by level of expression and localization. In terms of biological role, catalytic subunit of a constitutively active serine/threonine-protein kinase complex that phosphorylates a large number of substrates containing acidic residues C-terminal to the phosphorylated serine or threonine. Regulates numerous cellular processes, such as cell cycle progression, apoptosis and transcription, as well as viral infection. May act as a regulatory node which integrates and coordinates numerous signals leading to an appropriate cellular response. During mitosis, functions as a component of the p53/TP53-dependent spindle assembly checkpoint (SAC) that maintains cyclin-B-CDK1 activity and G2 arrest in response to spindle damage. Also required for p53/TP53-mediated apoptosis, phosphorylating 'Ser-392' of p53/TP53 following UV irradiation. Phosphorylates a number of DNA repair proteins in response to DNA damage, such as MDC1, MRE11, RAD9A, RAD51 and HTATSF1, promoting their recruitment to DNA damage sites. Can also negatively regulate apoptosis. Phosphorylates the caspases CASP9 and CASP2 and the apoptotic regulator NOL3. Phosphorylation protects CASP9 from cleavage and activation by CASP8, and inhibits the dimerization of CASP2 and activation of CASP8. Phosphorylates YY1, protecting YY1 from cleavage by CASP7 during apoptosis. Regulates transcription by direct phosphorylation of RNA polymerases I, II, III and IV. Also phosphorylates and regulates numerous transcription factors including NF-kappa-B, STAT1, CREB1, IRF1, IRF2, ATF1, ATF4, SRF, MAX, JUN, FOS, MYC and MYB. Phosphorylates Hsp90 and its co-chaperones FKBP4 and CDC37, which is essential for chaperone function. Mediates sequential phosphorylation of FNIP1, promoting its gradual interaction with Hsp90, leading to activate both kinase and non-kinase client proteins of Hsp90. Regulates Wnt signaling by phosphorylating CTNNB1 and the transcription factor LEF1. Acts as an ectokinase that phosphorylates several extracellular proteins. Phosphorylates PML at 'Ser-565' and primes it for ubiquitin-mediated degradation. Plays an important role in the circadian clock function by phosphorylating BMAL1 at 'Ser-90' which is pivotal for its interaction with CLOCK and which controls CLOCK nuclear entry. Phosphorylates FMR1, promoting FMR1-dependent formation of a membraneless compartment. May phosphorylate histone H2A on 'Ser-1'. The sequence is that of Casein kinase II subunit alpha (CSNK2A1) from Oryctolagus cuniculus (Rabbit).